The following is a 143-amino-acid chain: Transcription antitermination protein NusB (143 aa).

It belongs to the NusB family.

Functionally, involved in transcription antitermination. Required for transcription of ribosomal RNA (rRNA) genes. Binds specifically to the boxA antiterminator sequence of the ribosomal RNA (rrn) operons. The chain is Transcription antitermination protein NusB from Streptomyces griseus subsp. griseus (strain JCM 4626 / CBS 651.72 / NBRC 13350 / KCC S-0626 / ISP 5235).